Reading from the N-terminus, the 228-residue chain is Urease accessory protein UreF 1 (228 aa).

The protein belongs to the UreF family. UreD, UreF and UreG form a complex that acts as a GTP-hydrolysis-dependent molecular chaperone, activating the urease apoprotein by helping to assemble the nickel containing metallocenter of UreC. The UreE protein probably delivers the nickel.

It is found in the cytoplasm. Functionally, required for maturation of urease via the functional incorporation of the urease nickel metallocenter. Disruption of the ure1 gene cluster suggests that it protects brucellae during their passage through the stomach. The major route of infection in human brucellosis is oral. This chain is Urease accessory protein UreF 1, found in Brucella abortus (strain 2308).